The sequence spans 59 residues: UPF0391 membrane protein Geob_0344 (59 aa).

2 helical membrane-spanning segments follow: residues 4–24 and 33–53; these read WAAIFFIIAIVAAVFGFTGIA and FLFILFLVVALIMLILGITAG.

This sequence belongs to the UPF0391 family.

It is found in the cell membrane. The polypeptide is UPF0391 membrane protein Geob_0344 (Geotalea daltonii (strain DSM 22248 / JCM 15807 / FRC-32) (Geobacter daltonii)).